Reading from the N-terminus, the 20-residue chain is L-amino-acid oxidase L1 (20 aa).

The protein belongs to the flavin monoamine oxidase family. FIG1 subfamily. Monomer. This is in contrast with most of its orthologs, that are non-covalently linked homodimers. FAD is required as a cofactor. In terms of processing, N-glycosylated. Expressed by the venom gland.

The protein localises to the secreted. It carries out the reaction an L-alpha-amino acid + O2 + H2O = a 2-oxocarboxylate + H2O2 + NH4(+). The enzyme catalyses L-leucine + O2 + H2O = 4-methyl-2-oxopentanoate + H2O2 + NH4(+). It catalyses the reaction L-phenylalanine + O2 + H2O = 3-phenylpyruvate + H2O2 + NH4(+). The catalysed reaction is L-tryptophan + O2 + H2O = indole-3-pyruvate + H2O2 + NH4(+). It carries out the reaction L-methionine + O2 + H2O = 4-methylsulfanyl-2-oxobutanoate + H2O2 + NH4(+). The enzyme catalyses L-isoleucine + O2 + H2O = (S)-3-methyl-2-oxopentanoate + H2O2 + NH4(+). It catalyses the reaction L-tyrosine + O2 + H2O = 3-(4-hydroxyphenyl)pyruvate + H2O2 + NH4(+). Functionally, catalyzes an oxidative deamination of predominantly hydrophobic and aromatic L-amino acids, thus producing hydrogen peroxide that may contribute to the diverse toxic effects of this enzyme. Is active on L-Met, L-Ile, L-Leu, L-Phe, L-Trp, and L-Tyr. Exhibits diverse biological activities, such as hemorrhage, hemolysis, edema, apoptosis of vascular endothelial cells or tumor cell lines, antibacterial and antiparasitic activities, as well as regulation of platelet aggregation. Its effect on platelets is controversial, since it either induces aggregation or inhibits agonist-induced aggregation. These different effects are probably due to different experimental conditions. This Daboia russelii (Russel's viper) protein is L-amino-acid oxidase L1.